The following is a 181-amino-acid chain: Peptide deformylase (181 aa).

2 residues coordinate Fe cation: C99 and H141. E142 is an active-site residue. Residue H145 coordinates Fe cation.

It belongs to the polypeptide deformylase family. Fe(2+) is required as a cofactor.

It carries out the reaction N-terminal N-formyl-L-methionyl-[peptide] + H2O = N-terminal L-methionyl-[peptide] + formate. In terms of biological role, removes the formyl group from the N-terminal Met of newly synthesized proteins. Requires at least a dipeptide for an efficient rate of reaction. N-terminal L-methionine is a prerequisite for activity but the enzyme has broad specificity at other positions. The chain is Peptide deformylase from Chlamydia trachomatis serovar A (strain ATCC VR-571B / DSM 19440 / HAR-13).